The following is a 452-amino-acid chain: Exoglucanase 1 (452 aa).

The N-terminal stretch at 1-18 is a signal peptide; the sequence is MFSKFALTGSLLAGAVNA. N-linked (GlcNAc...) asparagine glycosylation is present at Asn75. Glu230 serves as the catalytic Nucleophile. Glu235 (proton donor) is an active-site residue. N-linked (GlcNAc...) asparagine glycosylation is found at Asn335 and Asn360.

The protein belongs to the glycosyl hydrolase 7 (cellulase C) family.

The enzyme catalyses Hydrolysis of (1-&gt;4)-beta-D-glucosidic linkages in cellulose and cellotetraose, releasing cellobiose from the non-reducing ends of the chains.. The biological conversion of cellulose to glucose generally requires three types of hydrolytic enzymes: (1) Endoglucanases which cut internal beta-1,4-glucosidic bonds; (2) Exocellobiohydrolases that cut the disaccharide cellobiose from the non-reducing end of the cellulose polymer chain; (3) Beta-1,4-glucosidases which hydrolyze the cellobiose and other short cello-oligosaccharides to glucose. This is Exoglucanase 1 (CBH-1) from Cryphonectria parasitica (Chestnut blight fungus).